The sequence spans 252 residues: Chitooligosaccharide deacetylase (252 aa).

Mg(2+) contacts are provided by His-61 and His-125.

The protein belongs to the YdjC deacetylase family. ChbG subfamily. In terms of assembly, homodimer. Requires Mg(2+) as cofactor.

Its subcellular location is the cytoplasm. It carries out the reaction N,N'-diacetylchitobiose + H2O = N-acetyl-beta-D-glucosaminyl-(1-&gt;4)-D-glucosamine + acetate. The enzyme catalyses diacetylchitobiose-6'-phosphate + H2O = N'-monoacetylchitobiose-6'-phosphate + acetate. The protein operates within glycan degradation; chitin degradation. Involved in the degradation of chitin. ChbG is essential for growth on the acetylated chitooligosaccharides chitobiose and chitotriose but is dispensable for growth on cellobiose and chitosan dimer, the deacetylated form of chitobiose. Deacetylation of chitobiose-6-P and chitotriose-6-P is necessary for both the activation of the chb promoter by the regulatory protein ChbR and the hydrolysis of phosphorylated beta-glucosides by the phospho-beta-glucosidase ChbF. Catalyzes the removal of only one acetyl group from chitobiose-6-P to yield monoacetylchitobiose-6-P, the inducer of ChbR and the substrate of ChbF. The polypeptide is Chitooligosaccharide deacetylase (Salmonella paratyphi A (strain ATCC 9150 / SARB42)).